The chain runs to 352 residues: Probable dual-specificity RNA methyltransferase RlmN (352 aa).

Glu-93 acts as the Proton acceptor in catalysis. In terms of domain architecture, Radical SAM core spans 99 to 333; sequence FNYGYSVCVT…IRLERGSSID (235 aa). A disulfide bridge links Cys-106 with Cys-336. [4Fe-4S] cluster-binding residues include Cys-113, Cys-117, and Cys-120. S-adenosyl-L-methionine-binding positions include 164–165, Ser-196, and Asn-295; that span reads GE. The active-site S-methylcysteine intermediate is the Cys-336.

This sequence belongs to the radical SAM superfamily. RlmN family. Requires [4Fe-4S] cluster as cofactor.

The protein localises to the cytoplasm. It carries out the reaction adenosine(2503) in 23S rRNA + 2 reduced [2Fe-2S]-[ferredoxin] + 2 S-adenosyl-L-methionine = 2-methyladenosine(2503) in 23S rRNA + 5'-deoxyadenosine + L-methionine + 2 oxidized [2Fe-2S]-[ferredoxin] + S-adenosyl-L-homocysteine. The catalysed reaction is adenosine(37) in tRNA + 2 reduced [2Fe-2S]-[ferredoxin] + 2 S-adenosyl-L-methionine = 2-methyladenosine(37) in tRNA + 5'-deoxyadenosine + L-methionine + 2 oxidized [2Fe-2S]-[ferredoxin] + S-adenosyl-L-homocysteine. Functionally, specifically methylates position 2 of adenine 2503 in 23S rRNA and position 2 of adenine 37 in tRNAs. This is Probable dual-specificity RNA methyltransferase RlmN from Malacoplasma penetrans (strain HF-2) (Mycoplasma penetrans).